A 183-amino-acid chain; its full sequence is Ribosome-recycling factor (183 aa).

Belongs to the RRF family.

It localises to the cytoplasm. In terms of biological role, responsible for the release of ribosomes from messenger RNA at the termination of protein biosynthesis. May increase the efficiency of translation by recycling ribosomes from one round of translation to another. In Afipia carboxidovorans (strain ATCC 49405 / DSM 1227 / KCTC 32145 / OM5) (Oligotropha carboxidovorans), this protein is Ribosome-recycling factor.